The sequence spans 149 residues: Putative prefoldin subunit alpha (149 aa).

Belongs to the prefoldin subunit alpha family.

The protein resides in the cytoplasm. In terms of biological role, molecular chaperone capable of stabilizing a range of proteins. This is Putative prefoldin subunit alpha from Aquifex aeolicus (strain VF5).